A 184-amino-acid chain; its full sequence is Photosystem I assembly protein Ycf4 (184 aa).

2 helical membrane passes run 20-42 and 57-79; these read VNLC…GFSS and IAFI…LGLY.

The protein belongs to the Ycf4 family.

The protein resides in the plastid. The protein localises to the chloroplast thylakoid membrane. Functionally, seems to be required for the assembly of the photosystem I complex. The protein is Photosystem I assembly protein Ycf4 of Adiantum capillus-veneris (Maidenhair fern).